A 475-amino-acid polypeptide reads, in one-letter code: Protein arginine N-methyltransferase 2 (475 aa).

Residues 167–194 (EFLSDDDDEEMDVDDDEEDESRDGEETG) are disordered. Residues 169–194 (LSDDDDEEMDVDDDEEDESRDGEETG) are compositionally biased toward acidic residues. Residues 247-475 (LAGSQMDYLK…EDFYLPVCTF (229 aa)) enclose the RMT2 domain. S-adenosyl-L-methionine-binding positions include Tyr254, Met285, 310–315 (FGLGII), 331–333 (EAH), 358–359 (WQ), and Asp378.

It belongs to the class I-like SAM-binding methyltransferase superfamily. RMT2 methyltransferase family. In terms of assembly, monomer.

It localises to the cytoplasm. Its subcellular location is the nucleus. S-adenosyl-L-methionine-dependent protein-arginine N-methyltransferase that methylates the delta-nitrogen atom of arginine residues to form N5-methylarginine (type IV) in target proteins. Monomethylates ribosomal protein L12. This is Protein arginine N-methyltransferase 2 from Yarrowia lipolytica (strain CLIB 122 / E 150) (Yeast).